The following is a 3801-amino-acid chain: Lysosomal-trafficking regulator (3801 aa).

A disordered region spans residues 148-173 (KITHRYSVRDARKTQLSTSDSEANSD). Ser164 is subject to Phosphoserine. Thr165 is modified (phosphothreonine). Ser166 bears the Phosphoserine mark. Residues 662-700 (ELSSSLSSPSYRFQGILPSSGSEDLLWKWDALKAYQNFV) form a WD 1 repeat. The span at 1181 to 1190 (AMTEKSHQSA) shows a compositional bias: basic and acidic residues. Disordered stretches follow at residues 1181–1203 (AMTE…FSEE) and 1221–1256 (YEAD…SPND). Residues 1221-1238 (YEADSESNPEDGETQDDG) show a composition bias toward acidic residues. Over residues 1246 to 1256 (EGFSASSSPND) the composition is skewed to polar residues. 2 positions are modified to phosphoserine: Ser1509 and Ser1510. Residues 1582–1626 (SQENIFLPSKWQHLVLTYLQQPQGKRRIHGKISIWVSGQRKPDVT) form a WD 2 repeat. 5 positions are modified to phosphoserine: Ser2105, Ser2124, Ser2213, Ser2217, and Ser2264. Basic and acidic residues predominate over residues 2205–2215 (KQLGAEPRSED). Residues 2205-2224 (KQLGAEPRSEDDSPGDESCP) form a disordered region. A BEACH-type PH domain is found at 3009–3115 (AASESIRVNR…VRDDVYHNIL (107 aa)). A BEACH domain is found at 3120–3422 (PNLLEYGNIT…QLFHMAHVSR (303 aa)). 5 WD repeats span residues 3563 to 3602 (SQQY…STPS), 3614 to 3653 (GHTE…YVQS), 3656 to 3699 (GHKS…VGHV), 3700 to 3744 (HCRE…PVRE), and 3749 to 3788 (KSNK…RLKQ).

As to quaternary structure, interacts with CPAP, LIP8 and ZNF521. Abundantly expressed in adult and fetal thymus, peripheral blood leukocytes, bone marrow and several regions of the adult brain.

The protein resides in the cytoplasm. Adapter protein that regulates and/or fission of intracellular vesicles such as lysosomes. Might regulate trafficking of effectors involved in exocytosis. In cytotoxic T-cells and natural killer (NK) cells, has role in the regulation of size, number and exocytosis of lytic granules. In macrophages and dendritic cells, regulates phagosome maturation by controlling the conversion of early phagosomal compartments into late phagosomes. In macrophages and dendritic cells, specifically involved in TLR3- and TLR4-induced production of pro-inflammatory cytokines by regulating the endosomal TLR3- TICAM1/TRIF and TLR4- TICAM1/TRIF signaling pathways. This chain is Lysosomal-trafficking regulator (LYST), found in Homo sapiens (Human).